The sequence spans 475 residues: Mucin-1 (475 aa).

The first 23 residues, 1-23 (MTPGTQSLFFLLLLLTVLTVVTG), serve as a signal peptide directing secretion. The interval 23 to 252 (GSGHASSTPG…SPLTSSNHST (230 aa)) is disordered. Over 24–380 (SGHASSTPGG…QSGAGVPGWG (357 aa)) the chain is Extracellular. The span at 38 to 48 (SATQRSSMPSS) shows a compositional bias: polar residues. The segment covering 54–75 (VSMTSSVLSSHSPGSGSSTTQG) has biased composition (low complexity). 5 tandem repeats follow at residues 86-105 (PASGSAATWGQDVTSVPVTR), 106-125 (PAPGSTTSPAQDVTSAPDTR), 126-145 (PALGSTAPPVHGVTSAPDTR), 146-165 (PTLGSTAPPVHGVTSAPDTR), and 166-185 (PTLGSTAPPVHNVTSASGSA). A 5 X 20 AA approximate tandem repeats region spans residues 86–185 (PASGSAATWG…HNVTSASGSA (100 aa)). Polar residues predominate over residues 90 to 102 (SAATWGQDVTSVP). T93 and T99 each carry an O-linked (GalNAc...) threonine glycan. S100 carries an O-linked (GalNAc...) serine glycan. T104 carries O-linked (GalNAc...) threonine glycosylation. Residues 109-122 (GSTTSPAQDVTSAP) are compositionally biased toward polar residues. N-linked (GlcNAc...) asparagine glycosylation occurs at N177. Residues 180 to 190 (SASGSASGSAS) are compositionally biased toward low complexity. Composition is skewed to polar residues over residues 191-213 (TLVHNGTSARATTTPASKSTPFS) and 233-252 (DASSTHHSTVSPLTSSNHST). N-linked (GlcNAc...) asparagine glycosylation is found at N195, N249, N275, and N353. The SEA domain occupies 259 to 368 (GVSFFFLSFH…VSVSDVPFPF (110 aa)). The helical transmembrane segment at 381–401 (IALLVLVCVLVALAIVYLIAL) threads the bilayer. Residues 402–475 (AVCQCRRKNY…PAVAATSANL (74 aa)) lie on the Cytoplasmic side of the membrane. S-palmitoyl cysteine attachment occurs at residues C404 and C406. Residues 412–448 (GQLDIFPARDAYHPMSEYPTYHTHGRYVPPSSTNRSP) form an interaction with P53 region. Y423 bears the Phosphotyrosine; by PDGFR mark. The short motif at 423 to 426 (YHPM) is the Interaction with GRB2 element. Y432 carries the post-translational modification Phosphotyrosine. The interval 435–460 (HGRYVPPSSTNRSPYEKVSEGNGGSS) is disordered. Y438 carries the phosphotyrosine; by PDGFR modification. Residues 443–450 (STNRSPYE) form a required for interaction with GSK3B region. A Phosphothreonine; by PKC/PRKCD modification is found at T444. Position 447 is a phosphoserine; by GSK3-beta (S447). Y449 is modified (phosphotyrosine; by CSK, EGFR and SRC). The Interaction with SRC and ESR1 signature appears at 449 to 452 (YEKV). A required for interaction with beta- and gamma-catenins region spans residues 453 to 461 (SEGNGGSSL). Y463 is subject to Phosphotyrosine. The Required for interaction with AP1S2 signature appears at 463-466 (YTNP).

In terms of assembly, the alpha subunit forms a tight, non-covalent heterodimeric complex with the proteolytically-released beta-subunit. Binds directly the SH2 domain of GRB2, and forms a MUC1/GRB2/SOS1 complex involved in RAS signaling. The cytoplasmic tail (MUC1CT) interacts with several proteins such as SRC, CTNNB1 and ERBs. Interaction with the SH2 domain of CSK decreases interaction with GSK3B. Interacts with CTNNB1/beta-catenin and JUP/gamma-catenin and promotes cell adhesion. Interaction with JUP/gamma-catenin is induced by heregulin. Binds PRKCD, ERBB2, ERBB3 and ERBB4. Heregulin (HRG) stimulates the interaction with ERBB2 and, to a much lesser extent, the interaction with ERBB3 and ERBB4. Interacts with P53 in response to DNA damage. Interacts with KLF4. Interacts with estrogen receptor alpha/ESR1, through its DNA-binding domain, and stimulates its transcription activity. Binds ADAM17. Post-translationally, probably both N- and O-glycosylated (in repeat region). In terms of processing, proteolytic cleavage in the SEA domain occurs in the endoplasmic reticulum by an autoproteolytic mechanism and requires the full-length SEA domain as well as requiring a Ser, Thr or Cys residue at the P + 1 site. Ectodomain shedding is mediated by ADAM17 in uterine epithelial cells. Dual palmitoylation on cysteine residues in the CQC motif is required for recycling from endosomes back to the plasma membrane. Post-translationally, phosphorylated on tyrosines and serine residues in the C-terminal. Phosphorylation on tyrosines in the C-terminal increases the nuclear location of MUC1 and beta-catenin. Phosphorylation by PKC delta induces binding of MUC1 to beta-catenin/CTNNB1 and thus decreases the formation of the beta-catenin/E-cadherin complex. Src-mediated phosphorylation inhibits interaction with GSK3B. Csk- or Src- or EGFR-mediated phosphorylation on Tyr-449 increases binding to beta-catenin/CTNNB1. GSK3B-mediated phosphorylation on Ser-447 decreases this interaction but restores the formation of the beta-cadherin/E-cadherin complex. On T-cell receptor activation, phosphorylated by LCK. PDGFR-mediated phosphorylation increases nuclear colocalization of MUC1CT and CTNNB1.

The protein resides in the apical cell membrane. Its subcellular location is the cell membrane. The protein localises to the cytoplasm. It localises to the nucleus. Its function is as follows. The alpha subunit has cell adhesive properties. Can act both as an adhesion and an anti-adhesion protein. May provide a protective layer on epithelial cells against bacterial and enzyme attack. Functionally, the beta subunit contains a C-terminal domain which is involved in cell signaling, through phosphorylations and protein-protein interactions. Modulates signaling in ERK, Src and NF-kappaB pathways. In activated T-cells, influences directly or indirectly the Ras/MAPK pathway. Promotes tumor progression. Regulates P53-mediated transcription and determines cell fate in the genotoxic stress response. Binds, together with KLF4, the PE21 promoter element of P53 and represses P53 activity. This chain is Mucin-1 (MUC1), found in Hylobates lar (Lar gibbon).